Consider the following 509-residue polypeptide: Maturase K (509 aa).

It belongs to the intron maturase 2 family. MatK subfamily.

It is found in the plastid. The protein resides in the chloroplast. Usually encoded in the trnK tRNA gene intron. Probably assists in splicing its own and other chloroplast group II introns. The protein is Maturase K of Nymphaea odorata (White water lily).